The chain runs to 407 residues: Accessory Sec system protein translocase subunit SecY2 (407 aa).

10 consecutive transmembrane segments (helical) span residues 13-33 (FLWT…TLPF), 65-85 (FFSI…MFTV), 104-124 (MLLT…NLPL), 133-153 (GTIV…LIWL), 158-178 (SSMG…SYIP), 192-212 (PLIL…AVLV), 248-268 (IMYA…LLFF), 287-307 (IPWF…FAFI), 345-365 (FAFV…LLIF), and 370-390 (YMRL…VFSI).

This sequence belongs to the SecY/SEC61-alpha family. SecY2 subfamily. May form heterotrimers with SecE and SecG subunits (Potential). Component of the accessory SecA2/SecY2 protein translocase complex required to export cell wall protein GspB.

The protein localises to the cell membrane. Its function is as follows. The central subunit of a protein translocation channel (Potential). Part of the accessory SecA2/SecY2 system specifically required to export GspB, a serine-rich repeat cell wall protein encoded upstream in the same operon. The protein is Accessory Sec system protein translocase subunit SecY2 of Streptococcus gordonii.